Consider the following 616-residue polypeptide: Probable galacturonosyltransferase 4 (616 aa).

Over 1–6 (MMVKLR) the chain is Cytoplasmic. A helical; Signal-anchor for type II membrane protein membrane pass occupies residues 7 to 29 (NLVLFFMLLTVVAHILLYTDPAA). The Lumenal segment spans residues 30-616 (SFKTPFSKRD…VYLRECNINP (587 aa)). Positions 132–152 (QTSEKVDEQPEPNAFGAKKDT) are disordered. N-linked (GlcNAc...) asparagine glycans are attached at residues Asn291, Asn326, Asn378, Asn481, and Asn514.

It belongs to the glycosyltransferase 8 family. Expressed in roots, inflorescences, siliques, leaves and stems.

Its subcellular location is the golgi apparatus membrane. It participates in glycan metabolism; pectin biosynthesis. May be involved in pectin and/or xylans biosynthesis in cell walls. The chain is Probable galacturonosyltransferase 4 (GAUT4) from Arabidopsis thaliana (Mouse-ear cress).